A 159-amino-acid chain; its full sequence is uncharacterized protein (159 aa).

Residues 1–13 (MTQPTRPSVTCDQ) show a composition bias toward polar residues. The disordered stretch occupies residues 1–57 (MTQPTRPSVTCDQGSSTIGGTAAQATTSSSATSGSNYQRDRLGRRPEIGVGGQPQIC). Over residues 14–35 (GSSTIGGTAAQATTSSSATSGS) the composition is skewed to low complexity. Residues 38–47 (QRDRLGRRPE) are compositionally biased toward basic and acidic residues.

This is an uncharacterized protein from Homo sapiens (Human).